The chain runs to 425 residues: GTPase Obg (425 aa).

The region spanning 1–158 (MFIDKAKIYV…REIILELKLL (158 aa)) is the Obg domain. An OBG-type G domain is found at 159–331 (ADVGLVGFPN…LMAEVSKTLA (173 aa)). Residues 165-172 (GFPNVGKS), 190-194 (FTTLK), 212-215 (DIPG), 282-285 (NKSD), and 312-314 (SAA) each bind GTP. Residues Ser172 and Thr192 each contribute to the Mg(2+) site. The OCT domain maps to 345-425 (LFIPEEKRFT…LNDFEFEFVI (81 aa)).

The protein belongs to the TRAFAC class OBG-HflX-like GTPase superfamily. OBG GTPase family. In terms of assembly, monomer. Mg(2+) is required as a cofactor.

It localises to the cytoplasm. In terms of biological role, an essential GTPase which binds GTP, GDP and possibly (p)ppGpp with moderate affinity, with high nucleotide exchange rates and a fairly low GTP hydrolysis rate. Plays a role in control of the cell cycle, stress response, ribosome biogenesis and in those bacteria that undergo differentiation, in morphogenesis control. The chain is GTPase Obg from Clostridium tetani (strain Massachusetts / E88).